The sequence spans 133 residues: MVNDTIADMITRIRNANLITQKQVAVIASNTNKGIAQCLLKEGFIESIEYNTNSSNNPELILSLKYQGKKRKPYITALQRVSKSGLRVYTSYKDIPKVLGGIGIAILSTSQGILTDKQARMQKIGGEILCYIW.

Belongs to the universal ribosomal protein uS8 family. As to quaternary structure, part of the 30S ribosomal subunit.

It localises to the plastid. It is found in the chloroplast. One of the primary rRNA binding proteins, it binds directly to 16S rRNA central domain where it helps coordinate assembly of the platform of the 30S subunit. This Mesostigma viride (Green alga) protein is Small ribosomal subunit protein uS8c (rps8).